The primary structure comprises 165 residues: SsrA-binding protein (165 aa).

Belongs to the SmpB family.

The protein resides in the cytoplasm. In terms of biological role, required for rescue of stalled ribosomes mediated by trans-translation. Binds to transfer-messenger RNA (tmRNA), required for stable association of tmRNA with ribosomes. tmRNA and SmpB together mimic tRNA shape, replacing the anticodon stem-loop with SmpB. tmRNA is encoded by the ssrA gene; the 2 termini fold to resemble tRNA(Ala) and it encodes a 'tag peptide', a short internal open reading frame. During trans-translation Ala-aminoacylated tmRNA acts like a tRNA, entering the A-site of stalled ribosomes, displacing the stalled mRNA. The ribosome then switches to translate the ORF on the tmRNA; the nascent peptide is terminated with the 'tag peptide' encoded by the tmRNA and targeted for degradation. The ribosome is freed to recommence translation, which seems to be the essential function of trans-translation. The sequence is that of SsrA-binding protein from Parvibaculum lavamentivorans (strain DS-1 / DSM 13023 / NCIMB 13966).